The primary structure comprises 476 residues: Bifunctional protein HldE (476 aa).

The ribokinase stretch occupies residues 1 to 319 (MKITLPEYDK…ANAVYSQQEI (319 aa)). 196-199 (NLAE) lines the ATP pocket. The active site involves D265. The tract at residues 345–476 (MTNGCFDILH…EIIKTIRNNS (132 aa)) is cytidylyltransferase.

It in the N-terminal section; belongs to the carbohydrate kinase PfkB family. This sequence in the C-terminal section; belongs to the cytidylyltransferase family. In terms of assembly, homodimer.

The enzyme catalyses D-glycero-beta-D-manno-heptose 7-phosphate + ATP = D-glycero-beta-D-manno-heptose 1,7-bisphosphate + ADP + H(+). It catalyses the reaction D-glycero-beta-D-manno-heptose 1-phosphate + ATP + H(+) = ADP-D-glycero-beta-D-manno-heptose + diphosphate. It functions in the pathway nucleotide-sugar biosynthesis; ADP-L-glycero-beta-D-manno-heptose biosynthesis; ADP-L-glycero-beta-D-manno-heptose from D-glycero-beta-D-manno-heptose 7-phosphate: step 1/4. It participates in nucleotide-sugar biosynthesis; ADP-L-glycero-beta-D-manno-heptose biosynthesis; ADP-L-glycero-beta-D-manno-heptose from D-glycero-beta-D-manno-heptose 7-phosphate: step 3/4. Its function is as follows. Catalyzes the phosphorylation of D-glycero-D-manno-heptose 7-phosphate at the C-1 position to selectively form D-glycero-beta-D-manno-heptose-1,7-bisphosphate. In terms of biological role, catalyzes the ADP transfer from ATP to D-glycero-beta-D-manno-heptose 1-phosphate, yielding ADP-D-glycero-beta-D-manno-heptose. The protein is Bifunctional protein HldE of Psychromonas ingrahamii (strain DSM 17664 / CCUG 51855 / 37).